The following is a 78-amino-acid chain: Large ribosomal subunit protein eL20 (78 aa).

The protein belongs to the eukaryotic ribosomal protein eL20 family. As to quaternary structure, part of the 50S ribosomal subunit. Binds 23S rRNA.

The sequence is that of Large ribosomal subunit protein eL20 from Nanoarchaeum equitans (strain Kin4-M).